Here is a 305-residue protein sequence, read N- to C-terminus: UDP-N-acetylenolpyruvoylglucosamine reductase 2 (305 aa).

Positions 33–197 constitute an FAD-binding PCMH-type domain; it reads VGGKADVFVA…LEARFELEEG (165 aa). Arginine 176 is a catalytic residue. The Proton donor role is filled by serine 226. Residue glutamate 296 is part of the active site.

The protein belongs to the MurB family. FAD serves as cofactor.

The protein localises to the cytoplasm. The enzyme catalyses UDP-N-acetyl-alpha-D-muramate + NADP(+) = UDP-N-acetyl-3-O-(1-carboxyvinyl)-alpha-D-glucosamine + NADPH + H(+). The protein operates within cell wall biogenesis; peptidoglycan biosynthesis. Cell wall formation. This chain is UDP-N-acetylenolpyruvoylglucosamine reductase 2 (murB2), found in Bacillus cereus (strain ATCC 14579 / DSM 31 / CCUG 7414 / JCM 2152 / NBRC 15305 / NCIMB 9373 / NCTC 2599 / NRRL B-3711).